The following is a 73-amino-acid chain: uncharacterized protein (73 aa).

The protein belongs to the asfivirus DP63R family.

This is an uncharacterized protein from African swine fever virus (isolate Tick/Malawi/Lil 20-1/1983) (ASFV).